Reading from the N-terminus, the 2210-residue chain is Orsellinic acid synthase ArmB (2210 aa).

The tract at residues 38 to 261 is N-terminal acylcarrier protein transacylase domain (SAT); sequence LLLDACHYAF…HKTTVDALYH (224 aa). The Ketosynthase family 3 (KS3) domain occupies 391–817; the sequence is QEPIAICGMS…GSNGALLLEE (427 aa). Residues Cys-561, His-696, and His-736 each act as for beta-ketoacyl synthase activity in the active site. The malonyl-CoA:ACP transacylase (MAT) domain stretch occupies residues 915 to 1240; that stretch reads VFVFSGQGGQ…GLTLSSSLSQ (326 aa). Ser-1009 functions as the For acyl/malonyl transferase activity in the catalytic mechanism. The N-terminal hotdog fold stretch occupies residues 1307–1437; that stretch reads MLQSWAQFPS…GQFRPLLVVD (131 aa). The PKS/mFAS DH domain maps to 1307-1614; that stretch reads MLQSWAQFPS…FKKLRLNTLQ (308 aa). The product template (PT) domain stretch occupies residues 1336-1611; sequence ITGHIVGDVP…GMCFKKLRLN (276 aa). The Proton acceptor; for dehydratase activity role is filled by His-1339. The interval 1464 to 1614 is C-terminal hotdog fold; that stretch reads AEVFTTRTAY…FKKLRLNTLQ (151 aa). Asp-1525 serves as the catalytic Proton donor; for dehydratase activity. The 76-residue stretch at 1660 to 1735 folds into the Carrier 1 domain; sequence VDVQNTVLNI…ELVREISSTV (76 aa). At Ser-1694 the chain carries O-(pantetheine 4'-phosphoryl)serine. A disordered region spans residues 1739–1761; it reads AATAVNTPETASTPEPTLQGDAS. The region spanning 1845–1922 is the Carrier 2 domain; it reads SSPSSDLVDT…AVNQYISSKR (78 aa). O-(pantetheine 4'-phosphoryl)serine is present on Ser-1882. The segment at 1920–1946 is disordered; the sequence is SKRPGKSPKQVEETAMDPDREEDLSDL. The segment covering 1933-1944 has biased composition (acidic residues); it reads TAMDPDREEDLS. A thioesterase (TE) domain region spans residues 1963-2202; it reads VPMSVQKSSS…LGAVTQALVD (240 aa).

The protein operates within secondary metabolite biosynthesis. Functionally, non-reducing polyketide synthase, part of the gene cluster that mediates the biosynthesis of melleolides, a range of antifungal and phytotoxic polyketide derivatives composed of an orsellinic acid (OA) moiety esterified to various sesquiterpene alcohols. The first step in melleolides biosynthesis is performed by the delta(6)-protoilludene synthase PRO1 which catalyzes the cyclization of farnesyl diphosphate to protoilludene. The orsellinic acid synthase armB produces OA by condensing acetyl-CoA with 3 malonyl-CoA units in a three-round chain elongation reaction folowed by a C2-C7 ring closure. ArmB further catalyzes the trans-esterification of OA to the various sesquiterpene alcohols resulting from the hydroxylation of protoilludene. The melleolides cluster also includes 5 cytochrome P450 monooxygenases, 4 NAD(+)-dependent oxidoreductases, one flavin-dependent oxidoreductase, and one O-methyltransferase. The cytochrome P450 monooxygenases may be involved in protoilludene hydroxylation to elaborate melleolides with multiple alcohol groups, such as melleolide D, which carries alcohol functionalities at C-4, C-5, C-10, and C-13. The role of the NAD(+)-dependent enzymes remains unknown. Numerous melleolides, including arnamial, show 5'-O-methylation of the aromatic moiety which may be catalyzed by the methyltransferase encoded in the cluster. The flavin-dependent oxidoreductase might represent the dehydrogenase yielding the aldehyde in position 1 of arnamial and other melleolides. Finally, several halogenase localized outside of the cluster (armH1 to armH5), are able to catalyze the transfer of a single chlorine atom to the melleolide backbone, resulting in a 6'-chloromelleolide product. The chain is Orsellinic acid synthase ArmB from Armillaria ostoyae (Armillaria root rot fungus).